The following is an 88-amino-acid chain: Phosphocarrier protein HPr (88 aa).

The 88-residue stretch at 1–88 folds into the HPr domain; the sequence is MASKEFHIVV…ETMTKEGLAE (88 aa). The active-site Pros-phosphohistidine intermediate is the His15. A Phosphoserine; by HPrK/P modification is found at Ser46.

Belongs to the HPr family.

The protein resides in the cytoplasm. With respect to regulation, phosphorylation on Ser-46 inhibits the phosphoryl transfer from enzyme I to HPr. Functionally, general (non sugar-specific) component of the phosphoenolpyruvate-dependent sugar phosphotransferase system (sugar PTS). This major carbohydrate active-transport system catalyzes the phosphorylation of incoming sugar substrates concomitantly with their translocation across the cell membrane. The phosphoryl group from phosphoenolpyruvate (PEP) is transferred to the phosphoryl carrier protein HPr by enzyme I. Phospho-HPr then transfers it to the PTS EIIA domain. In terms of biological role, P-Ser-HPr interacts with the catabolite control protein A (CcpA), forming a complex that binds to DNA at the catabolite response elements cre, operator sites preceding a large number of catabolite-regulated genes. Thus, P-Ser-HPr is a corepressor in carbon catabolite repression (CCR), a mechanism that allows bacteria to coordinate and optimize the utilization of available carbon sources. P-Ser-HPr also plays a role in inducer exclusion, in which it probably interacts with several non-PTS permeases and inhibits their transport activity. The sequence is that of Phosphocarrier protein HPr (ptsH) from Lactococcus lactis subsp. lactis (strain IL1403) (Streptococcus lactis).